Here is a 394-residue protein sequence, read N- to C-terminus: Tubulin-like protein CetZ4 (394 aa).

GTP contacts are provided by residues 10 to 14 (QAGGK), 110 to 112 (GTG), E142, N169, and N187.

It belongs to the CetZ family.

It localises to the cytoplasm. Its function is as follows. Involved in cell shape control. The sequence is that of Tubulin-like protein CetZ4 from Haloferax volcanii (strain ATCC 29605 / DSM 3757 / JCM 8879 / NBRC 14742 / NCIMB 2012 / VKM B-1768 / DS2) (Halobacterium volcanii).